Here is a 158-residue protein sequence, read N- to C-terminus: MSRLTHIDERGAARMVDVSGKAETAREATAACHVTMRAETLALVTEGTAKKGDVLATARIAGIMAAKRTSELIPLCHPLAIAGVTLELEPDAALPGIRIAATVKTTGPTGVEMEALTAASVAALTVYDMLKAAEREMRIEGLRVIRKSGGKSGDFRQE.

Residues 75 to 77 (LCH) and 113 to 114 (ME) each bind substrate. Asp-128 is a catalytic residue.

The protein belongs to the MoaC family. Homohexamer; trimer of dimers.

The catalysed reaction is (8S)-3',8-cyclo-7,8-dihydroguanosine 5'-triphosphate = cyclic pyranopterin phosphate + diphosphate. Its pathway is cofactor biosynthesis; molybdopterin biosynthesis. Functionally, catalyzes the conversion of (8S)-3',8-cyclo-7,8-dihydroguanosine 5'-triphosphate to cyclic pyranopterin monophosphate (cPMP). This Acidiphilium cryptum (strain JF-5) protein is Cyclic pyranopterin monophosphate synthase.